The sequence spans 288 residues: Acetyl-coenzyme A carboxylase carboxyl transferase subunit beta (288 aa).

A CoA carboxyltransferase N-terminal domain is found at 34–288; the sequence is LWVKCSRCNE…ANILSLHGTN (255 aa). The Zn(2+) site is built by Cys38, Cys41, Cys57, and Cys60. A C4-type zinc finger spans residues 38–60; it reads CSRCNEILYTKELDKNFKVCHKC.

This sequence belongs to the AccD/PCCB family. In terms of assembly, acetyl-CoA carboxylase is a heterohexamer composed of biotin carboxyl carrier protein (AccB), biotin carboxylase (AccC) and two subunits each of ACCase subunit alpha (AccA) and ACCase subunit beta (AccD). The cofactor is Zn(2+).

The protein localises to the cytoplasm. The enzyme catalyses N(6)-carboxybiotinyl-L-lysyl-[protein] + acetyl-CoA = N(6)-biotinyl-L-lysyl-[protein] + malonyl-CoA. Its pathway is lipid metabolism; malonyl-CoA biosynthesis; malonyl-CoA from acetyl-CoA: step 1/1. Functionally, component of the acetyl coenzyme A carboxylase (ACC) complex. Biotin carboxylase (BC) catalyzes the carboxylation of biotin on its carrier protein (BCCP) and then the CO(2) group is transferred by the transcarboxylase to acetyl-CoA to form malonyl-CoA. This Desulforamulus reducens (strain ATCC BAA-1160 / DSM 100696 / MI-1) (Desulfotomaculum reducens) protein is Acetyl-coenzyme A carboxylase carboxyl transferase subunit beta.